Here is a 471-residue protein sequence, read N- to C-terminus: Putative ABC transporter ATP-binding protein STK_11360 (471 aa).

ABC transporter domains lie at 4–241 and 255–470; these read LEIK…LEPL and VILE…VIKD. Residues 37-44 and 286-293 each bind ATP; these read GKSGSGKS and GDNGSGKS.

The protein belongs to the ABC transporter superfamily.

The protein resides in the cell membrane. Functionally, probably part of an ABC transporter complex. Responsible for energy coupling to the transport system. This is Putative ABC transporter ATP-binding protein STK_11360 from Sulfurisphaera tokodaii (strain DSM 16993 / JCM 10545 / NBRC 100140 / 7) (Sulfolobus tokodaii).